The sequence spans 322 residues: Ribonuclease Z (322 aa).

7 residues coordinate Zn(2+): His62, His64, Asp66, His67, His143, Asp215, and His273. Asp66 acts as the Proton acceptor in catalysis. Residues 300–314 (ELRRYELDPREKEPD) show a composition bias toward basic and acidic residues. A disordered region spans residues 300-322 (ELRRYELDPREKEPDPVGPADES).

The protein belongs to the RNase Z family. As to quaternary structure, homodimer. Zn(2+) serves as cofactor.

It carries out the reaction Endonucleolytic cleavage of RNA, removing extra 3' nucleotides from tRNA precursor, generating 3' termini of tRNAs. A 3'-hydroxy group is left at the tRNA terminus and a 5'-phosphoryl group is left at the trailer molecule.. Zinc phosphodiesterase, which displays some tRNA 3'-processing endonuclease activity. Probably involved in tRNA maturation, by removing a 3'-trailer from precursor tRNA. This is Ribonuclease Z from Salinibacter ruber (strain DSM 13855 / M31).